The primary structure comprises 367 residues: Uroporphyrinogen decarboxylase (367 aa).

Met1 is modified (N-acetylmethionine). Positions 37, 39, 41, 50, 86, 164, 219, and 339 each coordinate coproporphyrinogen I. Coproporphyrinogen III-binding residues include Arg37, Ala39, and Arg41. Coproporphyrinogen III contacts are provided by Asp86, Tyr164, Ser219, and His339.

The protein belongs to the uroporphyrinogen decarboxylase family. As to quaternary structure, homodimer.

It is found in the cytoplasm. It localises to the cytosol. The enzyme catalyses uroporphyrinogen III + 4 H(+) = coproporphyrinogen III + 4 CO2. It catalyses the reaction uroporphyrinogen I + 4 H(+) = coproporphyrinogen I + 4 CO2. Its pathway is porphyrin-containing compound metabolism; protoporphyrin-IX biosynthesis; coproporphyrinogen-III from 5-aminolevulinate: step 4/4. Functionally, catalyzes the sequential decarboxylation of the four acetate side chains of uroporphyrinogen to form coproporphyrinogen and participates in the fifth step in the heme biosynthetic pathway. Isomer I or isomer III of uroporphyrinogen may serve as substrate, but only coproporphyrinogen III can ultimately be converted to heme. In vitro also decarboxylates pentacarboxylate porphyrinogen I. This chain is Uroporphyrinogen decarboxylase, found in Pongo abelii (Sumatran orangutan).